The chain runs to 132 residues: Histone H2A.1 (132 aa).

Ser-2 is subject to N-acetylserine. An N6-acetyllysine mark is found at Lys-5 and Lys-8. N6-succinyllysine is present on residues Lys-14 and Lys-22. The residue at position 106 (Gln-106) is an N5-methylglutamine. Lys-120 is modified (N6-malonyllysine; alternate). Residue Lys-127 forms a Glycyl lysine isopeptide (Lys-Gly) (interchain with G-Cter in SUMO) linkage. Position 129 is a phosphoserine (Ser-129). Residues 129–130 (SQ) carry the [ST]-Q motif motif.

Belongs to the histone H2A family. The nucleosome is a histone octamer containing two molecules each of H2A, H2B, H3 and H4 assembled in one H3-H4 heterotetramer and two H2A-H2B heterodimers. The octamer wraps approximately 147 bp of DNA. In terms of processing, phosphorylated to form H2AS128ph (gamma-H2A) in response to DNA double-strand breaks (DSBs) generated by exogenous genotoxic agents and by stalled replication forks. Phosphorylation is dependent on the DNA damage checkpoint kinases MEC1/ATR and TEL1/ATM, spreads on either side of a detected DSB site and may mark the surrounding chromatin for recruitment of proteins required for DNA damage signaling and repair. Gamma-H2A interacts with ARP4, a shared component of the NuA4 histone acetyltransferase complex and the INO80 and SWR1 chromatin remodeling complexes, and serves to recruit first NuA4, mediating histone H4 acetylation, and subsequently the INO80/SWR1 complexes, facilitating DNA resection, to DSB sites. Gamma-H2A is required for sequestering cohesin around the break site, which is important for efficient post-replicative double-strand break repair by homologous recombination, holding the damaged chromatid close to its undamaged sister template. Gamma-H2A is removed from the DNA prior to the strand invasion-primer extension step of the repair process and subsequently dephosphorylated by PPH3, a component of the histone H2A phosphatase complex (HTP-C). Dephosphorylation is necessary for efficient recovery from the DNA damage checkpoint. Post-translationally, N-acetylated by NAT4. Acetylated by ESA1, a component of the NuA4 histone acetyltransferase (HAT) complex, to form H2AK4ac and H2AK7ac. In terms of processing, glutamine methylation at Gln-106 (H2AQ105me) by NOP1 is specifically dedicated to polymerase I. It is present at 35S ribosomal DNA locus and impairs binding of the FACT complex. Post-translationally, sumoylated to from H2AK126su. May lead to transcriptional repression.

The protein resides in the nucleus. Its subcellular location is the chromosome. Its function is as follows. Core component of nucleosome which plays a central role in DNA double strand break (DSB) repair. Nucleosomes wrap and compact DNA into chromatin, limiting DNA accessibility to the cellular machineries which require DNA as a template. Histones thereby play a central role in transcription regulation, DNA repair, DNA replication and chromosomal stability. DNA accessibility is regulated via a complex set of post-translational modifications of histones, also called histone code, and nucleosome remodeling. This chain is Histone H2A.1 (HTA1), found in Saccharomyces cerevisiae (strain ATCC 204508 / S288c) (Baker's yeast).